A 98-amino-acid polypeptide reads, in one-letter code: Small ribosomal subunit protein bS6 (98 aa).

This sequence belongs to the bacterial ribosomal protein bS6 family.

In terms of biological role, binds together with bS18 to 16S ribosomal RNA. This Staphylococcus epidermidis (strain ATCC 35984 / DSM 28319 / BCRC 17069 / CCUG 31568 / BM 3577 / RP62A) protein is Small ribosomal subunit protein bS6.